A 247-amino-acid polypeptide reads, in one-letter code: GTP cyclohydrolase 1 type 2 homolog (247 aa).

Residues His-63, His-64, Asp-101, His-215, and Glu-219 each contribute to the a divalent metal cation site.

It belongs to the GTP cyclohydrolase I type 2/NIF3 family. In terms of assembly, homohexamer.

The protein is GTP cyclohydrolase 1 type 2 homolog of Buchnera aphidicola subsp. Acyrthosiphon pisum (strain APS) (Acyrthosiphon pisum symbiotic bacterium).